Reading from the N-terminus, the 901-residue chain is HTH-type transcriptional regulator MalT (901 aa).

39–46 (SPAGYGKT) lines the ATP pocket. In terms of domain architecture, HTH luxR-type spans 829-894 (ELIRTSPLTQ…DAVQHAQQLL (66 aa)). Residues 853-872 (NEQIAGELAVAATTIKTHIR) constitute a DNA-binding region (H-T-H motif).

This sequence belongs to the MalT family. In terms of assembly, monomer in solution. Oligomerizes to an active state in the presence of the positive effectors ATP and maltotriose.

Activated by ATP and maltotriose, which are both required for DNA binding. Positively regulates the transcription of the maltose regulon whose gene products are responsible for uptake and catabolism of malto-oligosaccharides. Specifically binds to the promoter region of its target genes, recognizing a short DNA motif called the MalT box. This is HTH-type transcriptional regulator MalT from Salmonella gallinarum (strain 287/91 / NCTC 13346).